A 149-amino-acid chain; its full sequence is D-aminoacyl-tRNA deacylase (149 aa).

The short motif at 137-138 is the Gly-cisPro motif, important for rejection of L-amino acids element; it reads GP.

Belongs to the DTD family. In terms of assembly, homodimer.

It is found in the cytoplasm. The catalysed reaction is glycyl-tRNA(Ala) + H2O = tRNA(Ala) + glycine + H(+). It carries out the reaction a D-aminoacyl-tRNA + H2O = a tRNA + a D-alpha-amino acid + H(+). Its function is as follows. An aminoacyl-tRNA editing enzyme that deacylates mischarged D-aminoacyl-tRNAs. Also deacylates mischarged glycyl-tRNA(Ala), protecting cells against glycine mischarging by AlaRS. Acts via tRNA-based rather than protein-based catalysis; rejects L-amino acids rather than detecting D-amino acids in the active site. By recycling D-aminoacyl-tRNA to D-amino acids and free tRNA molecules, this enzyme counteracts the toxicity associated with the formation of D-aminoacyl-tRNA entities in vivo and helps enforce protein L-homochirality. The sequence is that of D-aminoacyl-tRNA deacylase from Leuconostoc mesenteroides subsp. mesenteroides (strain ATCC 8293 / DSM 20343 / BCRC 11652 / CCM 1803 / JCM 6124 / NCDO 523 / NBRC 100496 / NCIMB 8023 / NCTC 12954 / NRRL B-1118 / 37Y).